Reading from the N-terminus, the 167-residue chain is Ribosome maturation factor RimM (167 aa).

The PRC barrel domain occupies 92-165 (EDTYYIADII…RITIDPIEGM (74 aa)).

The protein belongs to the RimM family. As to quaternary structure, binds ribosomal protein uS19.

It localises to the cytoplasm. An accessory protein needed during the final step in the assembly of 30S ribosomal subunit, possibly for assembly of the head region. Essential for efficient processing of 16S rRNA. May be needed both before and after RbfA during the maturation of 16S rRNA. It has affinity for free ribosomal 30S subunits but not for 70S ribosomes. In Alkaliphilus oremlandii (strain OhILAs) (Clostridium oremlandii (strain OhILAs)), this protein is Ribosome maturation factor RimM.